The chain runs to 330 residues: Cathepsin K (330 aa).

The N-terminal stretch at 1-16 (MWGLEVLLLLPMASFA) is a signal peptide. A propeptide spans 17-115 (LYPEEILDTQ…TLYIPDWESR (99 aa)) (activation peptide). N-linked (GlcNAc...) asparagine glycosylation is present at asparagine 104. 3 cysteine pairs are disulfide-bonded: cysteine 137–cysteine 178, cysteine 171–cysteine 211, and cysteine 270–cysteine 319. Cysteine 140 is an active-site residue. Active-site residues include histidine 277 and asparagine 297.

Belongs to the peptidase C1 family.

It localises to the lysosome. The protein resides in the secreted. Its subcellular location is the apical cell membrane. The catalysed reaction is Broad proteolytic activity. With small-molecule substrates and inhibitors, the major determinant of specificity is P2, which is preferably Leu, Met &gt; Phe, and not Arg.. Thiol protease involved in osteoclastic bone resorption and may participate partially in the disorder of bone remodeling. Displays potent endoprotease activity against fibrinogen at acid pH. May play an important role in extracellular matrix degradation. Involved in the release of thyroid hormone thyroxine (T4) by limited proteolysis of TG/thyroglobulin in the thyroid follicle lumen. In Canis lupus familiaris (Dog), this protein is Cathepsin K (CTSK).